Here is a 603-residue protein sequence, read N- to C-terminus: Aspartate--tRNA(Asp/Asn) ligase (603 aa).

The tract at residues 205 to 208 is aspartate; that stretch reads QLFK. Arg227 contacts L-aspartate. Residues 227 to 229 and Gln236 contribute to the ATP site; that span reads RDE. His463 contacts L-aspartate. Glu497 is an ATP binding site. Arg504 is an L-aspartate binding site. 549–552 is an ATP binding site; sequence GMDR.

The protein belongs to the class-II aminoacyl-tRNA synthetase family. Type 1 subfamily. As to quaternary structure, homodimer.

It is found in the cytoplasm. The enzyme catalyses tRNA(Asx) + L-aspartate + ATP = L-aspartyl-tRNA(Asx) + AMP + diphosphate. Its function is as follows. Aspartyl-tRNA synthetase with relaxed tRNA specificity since it is able to aspartylate not only its cognate tRNA(Asp) but also tRNA(Asn). Reaction proceeds in two steps: L-aspartate is first activated by ATP to form Asp-AMP and then transferred to the acceptor end of tRNA(Asp/Asn). The polypeptide is Aspartate--tRNA(Asp/Asn) ligase (Anaeromyxobacter dehalogenans (strain 2CP-1 / ATCC BAA-258)).